A 330-amino-acid polypeptide reads, in one-letter code: 1,8-cineole synthase (330 aa).

D81 serves as a coordination point for Mg(2+). A DDXXD motif motif is present at residues 81-85 (DDHFD). Residue R174 coordinates substrate. Mg(2+)-binding residues include N220 and S224. An NXXXSXXXE motif motif is present at residues 220 to 228 (NDVLSLEKE). K227 is a substrate binding site. E228 is a Mg(2+) binding site. Residue 314-315 (RY) coordinates substrate.

It belongs to the terpene synthase family. In terms of assembly, homodimer. The cofactor is Mg(2+).

It carries out the reaction (2E)-geranyl diphosphate + H2O = 1,8-cineole + diphosphate. It catalyses the reaction neryl diphosphate + H2O = 1,8-cineole + diphosphate. Its function is as follows. In vitro, catalyzes the formation of 1,8-cineole from geranyl diphosphate (GPP). Can also accept neryl diphosphate (NPP) as substrate to produce 1,8-cineole. This chain is 1,8-cineole synthase, found in Streptomyces clavuligerus.